Reading from the N-terminus, the 167-residue chain is 2-C-methyl-D-erythritol 2,4-cyclodiphosphate synthase (167 aa).

A divalent metal cation contacts are provided by aspartate 10 and histidine 12. Residues 10 to 12 and 36 to 37 each bind 4-CDP-2-C-methyl-D-erythritol 2-phosphate; these read DVH and HS. Histidine 44 provides a ligand contact to a divalent metal cation. 4-CDP-2-C-methyl-D-erythritol 2-phosphate is bound by residues 58–60, 63–67, 134–137, phenylalanine 141, and arginine 144; these read NIG, FPNTN, and TTSE.

The protein belongs to the IspF family. Homotrimer. Requires a divalent metal cation as cofactor.

The enzyme catalyses 4-CDP-2-C-methyl-D-erythritol 2-phosphate = 2-C-methyl-D-erythritol 2,4-cyclic diphosphate + CMP. Its pathway is isoprenoid biosynthesis; isopentenyl diphosphate biosynthesis via DXP pathway; isopentenyl diphosphate from 1-deoxy-D-xylulose 5-phosphate: step 4/6. In terms of biological role, involved in the biosynthesis of isopentenyl diphosphate (IPP) and dimethylallyl diphosphate (DMAPP), two major building blocks of isoprenoid compounds. Catalyzes the conversion of 4-diphosphocytidyl-2-C-methyl-D-erythritol 2-phosphate (CDP-ME2P) to 2-C-methyl-D-erythritol 2,4-cyclodiphosphate (ME-CPP) with a corresponding release of cytidine 5-monophosphate (CMP). In Azobacteroides pseudotrichonymphae genomovar. CFP2, this protein is 2-C-methyl-D-erythritol 2,4-cyclodiphosphate synthase.